We begin with the raw amino-acid sequence, 191 residues long: 3-isopropylmalate dehydratase small subunit (191 aa).

The protein belongs to the LeuD family. LeuD type 1 subfamily. In terms of assembly, heterodimer of LeuC and LeuD.

The catalysed reaction is (2R,3S)-3-isopropylmalate = (2S)-2-isopropylmalate. It functions in the pathway amino-acid biosynthesis; L-leucine biosynthesis; L-leucine from 3-methyl-2-oxobutanoate: step 2/4. In terms of biological role, catalyzes the isomerization between 2-isopropylmalate and 3-isopropylmalate, via the formation of 2-isopropylmaleate. The chain is 3-isopropylmalate dehydratase small subunit from Staphylococcus saprophyticus subsp. saprophyticus (strain ATCC 15305 / DSM 20229 / NCIMB 8711 / NCTC 7292 / S-41).